Here is a 426-residue protein sequence, read N- to C-terminus: Glutamate-1-semialdehyde 2,1-aminomutase (426 aa).

Lys-265 bears the N6-(pyridoxal phosphate)lysine mark.

This sequence belongs to the class-III pyridoxal-phosphate-dependent aminotransferase family. HemL subfamily. In terms of assembly, homodimer. The cofactor is pyridoxal 5'-phosphate.

The protein localises to the cytoplasm. It carries out the reaction (S)-4-amino-5-oxopentanoate = 5-aminolevulinate. The protein operates within porphyrin-containing compound metabolism; protoporphyrin-IX biosynthesis; 5-aminolevulinate from L-glutamyl-tRNA(Glu): step 2/2. The chain is Glutamate-1-semialdehyde 2,1-aminomutase from Akkermansia muciniphila (strain ATCC BAA-835 / DSM 22959 / JCM 33894 / BCRC 81048 / CCUG 64013 / CIP 107961 / Muc).